The chain runs to 445 residues: Chromosomal replication initiator protein DnaA (445 aa).

Residues 1–69 (MEKIWLEAQS…IEAISSLTNI (69 aa)) are domain I, interacts with DnaA modulators. Residues 69 to 108 (IKYQVDFKITEKSQVEKKKVDLQATEKIENDSTRNVDFNT) form a domain II region. The interval 109 to 325 (NLNPKYTFDS…GMLIRLGAYA (217 aa)) is domain III, AAA+ region. ATP contacts are provided by Gly-153, Gly-155, Lys-156, and Thr-157. The domain IV, binds dsDNA stretch occupies residues 326-445 (SLTGSEISLN…VEKMKKELMS (120 aa)).

This sequence belongs to the DnaA family. In terms of assembly, oligomerizes as a right-handed, spiral filament on DNA at oriC.

It is found in the cytoplasm. Plays an essential role in the initiation and regulation of chromosomal replication. ATP-DnaA binds to the origin of replication (oriC) to initiate formation of the DNA replication initiation complex once per cell cycle. Binds the DnaA box (a 9 base pair repeat at the origin) and separates the double-stranded (ds)DNA. Forms a right-handed helical filament on oriC DNA; dsDNA binds to the exterior of the filament while single-stranded (ss)DNA is stabiized in the filament's interior. The ATP-DnaA-oriC complex binds and stabilizes one strand of the AT-rich DNA unwinding element (DUE), permitting loading of DNA polymerase. After initiation quickly degrades to an ADP-DnaA complex that is not apt for DNA replication. Binds acidic phospholipids. This Geotalea daltonii (strain DSM 22248 / JCM 15807 / FRC-32) (Geobacter daltonii) protein is Chromosomal replication initiator protein DnaA.